The following is a 201-amino-acid chain: Casparian strip membrane protein 2 (201 aa).

The Cytoplasmic segment spans residues 1–38 (MKSTGEATAINIGETKSASATTVATTKAIQHPKAGLKR). Residues 39-59 (GLAIFDFILRLSAIGAALAAT) traverse the membrane as a helical segment. At 60 to 89 (TTMGTTDQTLPFFTQFFQFQASYDDLPAFS) the chain is on the extracellular side. A helical transmembrane segment spans residues 90-110 (FFVIANAIASGYLFLSLPFSI). Residues 111–129 (VCIVRPHAMGARLLLVICD) are Cytoplasmic-facing. The helical transmembrane segment at 130 to 150 (TVMVALTIAAAAAAAAIVYLA) threads the bilayer. At 151–175 (HNGNSNANWVAICQQFDDFCQSVSG) the chain is on the extracellular side. A helical transmembrane segment spans residues 176–196 (AVVASFIAAVLFMLMIVLSAF). The Cytoplasmic portion of the chain corresponds to 197 to 201 (SLRKH).

Belongs to the Casparian strip membrane proteins (CASP) family. As to quaternary structure, homodimer and heterodimers.

Its subcellular location is the cell membrane. Regulates membrane-cell wall junctions and localized cell wall deposition. Required for establishment of the Casparian strip membrane domain (CSD) and the subsequent formation of Casparian strips, a cell wall modification of the root endodermis that determines an apoplastic barrier between the intraorganismal apoplasm and the extraorganismal apoplasm and prevents lateral diffusion. This chain is Casparian strip membrane protein 2, found in Vitis vinifera (Grape).